A 577-amino-acid chain; its full sequence is Sensory neuron membrane protein 2 (577 aa).

Residues 1-6 (MVQCTL) are Cytoplasmic-facing. The chain crosses the membrane as a helical span at residues 7–27 (IWAGIGAMMAVSGALLGWVVF). The Extracellular portion of the chain corresponds to 28-519 (PRAVHEKVIE…LMKVLSLLDV (492 aa)). N-linked (GlcNAc...) asparagine glycosylation is found at Asn66, Asn161, Asn271, and Asn307. Disulfide bonds link Cys316/Cys384, Cys345/Cys411, and Cys386/Cys400. Residues 520-540 (VQWVLIGVGLLLAVLMPTVYF) traverse the membrane as a helical segment. The Cytoplasmic portion of the chain corresponds to 541–577 (VKRCRGEGSRTVSPAVTATTSAASLSTVAGVTGDRSK).

It belongs to the CD36 family.

Its subcellular location is the cell membrane. Functionally, plays an olfactory role that is not restricted to pheromone sensitivity. The chain is Sensory neuron membrane protein 2 from Anopheles gambiae (African malaria mosquito).